Here is a 185-residue protein sequence, read N- to C-terminus: Large ribosomal subunit protein uL22 (185 aa).

The interval 158–185 is disordered; the sequence is AKPREDEPHKKKISKKKLARAKEKMLRE. Positions 167–176 are enriched in basic residues; that stretch reads KKKISKKKLA.

Belongs to the universal ribosomal protein uL22 family.

The polypeptide is Large ribosomal subunit protein uL22 (RpL17) (Diaphorina citri (Asian citrus psyllid)).